A 150-amino-acid chain; its full sequence is UPF0756 membrane protein A1S_2121 (150 aa).

Transmembrane regions (helical) follow at residues 22-42, 45-65, 83-103, and 115-135; these read SQNAAVTIAAGILIVIKITPL, FFPYIQAHGLNLGILILTIGV, FISFKSLVAIAIGLLVAWLGG, and VVAGLLIGTVAGVALLRGVPV.

Belongs to the UPF0756 family.

The protein localises to the cell membrane. The protein is UPF0756 membrane protein A1S_2121 of Acinetobacter baumannii (strain ATCC 17978 / DSM 105126 / CIP 53.77 / LMG 1025 / NCDC KC755 / 5377).